The chain runs to 71 residues: DNA-directed RNA polymerase subunit epsilon (71 aa).

The protein belongs to the RNA polymerase subunit epsilon family. In terms of assembly, RNAP is composed of a core of 2 alpha, a beta and a beta' subunit. The core is associated with a delta subunit, and at least one of epsilon or omega. When a sigma factor is associated with the core the holoenzyme is formed, which can initiate transcription.

It carries out the reaction RNA(n) + a ribonucleoside 5'-triphosphate = RNA(n+1) + diphosphate. A non-essential component of RNA polymerase (RNAP). This Geobacillus kaustophilus (strain HTA426) protein is DNA-directed RNA polymerase subunit epsilon.